An 87-amino-acid polypeptide reads, in one-letter code: Small ribosomal subunit protein bS16c (87 aa).

This sequence belongs to the bacterial ribosomal protein bS16 family.

Its subcellular location is the plastid. The protein resides in the chloroplast. In Zygnema circumcarinatum (Green alga), this protein is Small ribosomal subunit protein bS16c.